The following is a 283-amino-acid chain: Protein/nucleic acid deglycase HchA (283 aa).

Zn(2+) is bound by residues histidine 86, glutamate 91, and histidine 123. The Nucleophile role is filled by cysteine 185.

This sequence belongs to the peptidase C56 family. HchA subfamily. Homodimer.

It is found in the cytoplasm. The catalysed reaction is N(omega)-(1-hydroxy-2-oxopropyl)-L-arginyl-[protein] + H2O = lactate + L-arginyl-[protein] + H(+). The enzyme catalyses N(6)-(1-hydroxy-2-oxopropyl)-L-lysyl-[protein] + H2O = lactate + L-lysyl-[protein] + H(+). It carries out the reaction S-(1-hydroxy-2-oxopropyl)-L-cysteinyl-[protein] + H2O = lactate + L-cysteinyl-[protein] + H(+). It catalyses the reaction N(omega)-(1-hydroxy-2-oxoethyl)-L-arginyl-[protein] + H2O = L-arginyl-[protein] + glycolate + H(+). The catalysed reaction is N(6)-(1-hydroxy-2-oxoethyl)-L-lysyl-[protein] + H2O = glycolate + L-lysyl-[protein] + H(+). The enzyme catalyses S-(1-hydroxy-2-oxoethyl)-L-cysteinyl-[protein] + H2O = glycolate + L-cysteinyl-[protein] + H(+). It carries out the reaction N(2)-(1-hydroxy-2-oxopropyl)-dGTP + H2O = lactate + dGTP + H(+). It catalyses the reaction N(2)-(1-hydroxy-2-oxopropyl)-GTP + H2O = lactate + GTP + H(+). The catalysed reaction is N(2)-(1-hydroxy-2-oxopropyl)-GDP + H2O = lactate + GDP + H(+). The enzyme catalyses N(2)-(1-hydroxy-2-oxopropyl)-GMP + H2O = lactate + GMP + H(+). It carries out the reaction N(2)-(1-hydroxy-2-oxoethyl)-dGTP + H2O = dGTP + glycolate + H(+). It catalyses the reaction N(2)-(1-hydroxy-2-oxoethyl)-GTP + H2O = glycolate + GTP + H(+). The catalysed reaction is N(2)-(1-hydroxy-2-oxoethyl)-GDP + H2O = glycolate + GDP + H(+). The enzyme catalyses N(2)-(1-hydroxy-2-oxoethyl)-GMP + H2O = glycolate + GMP + H(+). It carries out the reaction an N(2)-(1-hydroxy-2-oxopropyl)-guanosine in RNA + H2O = a guanosine in RNA + lactate + H(+). It catalyses the reaction an N(2)-(1-hydroxy-2-oxopropyl)-2'-deoxyguanosine in DNA + H2O = a 2'-deoxyguanosine in DNA + lactate + H(+). The catalysed reaction is an N(2)-(1-hydroxy-2-oxoethyl)-guanosine in RNA + H2O = a guanosine in RNA + glycolate + H(+). The enzyme catalyses an N(2)-(1-hydroxy-2-oxoethyl)-2'-deoxyguanosine in DNA + H2O = a 2'-deoxyguanosine in DNA + glycolate + H(+). Its function is as follows. Protein and nucleotide deglycase that catalyzes the deglycation of the Maillard adducts formed between amino groups of proteins or nucleotides and reactive carbonyl groups of glyoxals. Thus, functions as a protein deglycase that repairs methylglyoxal- and glyoxal-glycated proteins, and releases repaired proteins and lactate or glycolate, respectively. Deglycates cysteine, arginine and lysine residues in proteins, and thus reactivates these proteins by reversing glycation by glyoxals. Acts on early glycation intermediates (hemithioacetals and aminocarbinols), preventing the formation of Schiff bases and advanced glycation endproducts (AGE). Also functions as a nucleotide deglycase able to repair glycated guanine in the free nucleotide pool (GTP, GDP, GMP, dGTP) and in DNA and RNA. Is thus involved in a major nucleotide repair system named guanine glycation repair (GG repair), dedicated to reversing methylglyoxal and glyoxal damage via nucleotide sanitization and direct nucleic acid repair. Plays an important role in protecting cells from carbonyl stress. This is Protein/nucleic acid deglycase HchA from Escherichia coli O45:K1 (strain S88 / ExPEC).